The primary structure comprises 293 residues: Nucleotide-binding protein BCG9842_B5683 (293 aa).

An ATP-binding site is contributed by glycine 14 to threonine 21. Aspartate 65 to glycine 68 contributes to the GTP binding site.

Belongs to the RapZ-like family.

Functionally, displays ATPase and GTPase activities. This Bacillus cereus (strain G9842) protein is Nucleotide-binding protein BCG9842_B5683.